The sequence spans 600 residues: DNA primase (600 aa).

A CHC2-type zinc finger spans residues 38–62; that stretch reads CPFHDEKTPSFIVYPTRGHYHCYGC. Positions 253–333 constitute a Toprim domain; the sequence is KRVILVEGQA…GIAVIVCRLP (81 aa). 3 residues coordinate Mg(2+): Glu259, Asp304, and Asp306.

It belongs to the DnaG primase family. As to quaternary structure, monomer. Interacts with DnaB. It depends on Zn(2+) as a cofactor. The cofactor is Mg(2+).

The enzyme catalyses ssDNA + n NTP = ssDNA/pppN(pN)n-1 hybrid + (n-1) diphosphate.. In terms of biological role, RNA polymerase that catalyzes the synthesis of short RNA molecules used as primers for DNA polymerase during DNA replication. The sequence is that of DNA primase from Chlamydia muridarum (strain MoPn / Nigg).